Reading from the N-terminus, the 497-residue chain is Anthranilate synthase component 1 (497 aa).

L-tryptophan-binding positions include S49 and 271–273; that span reads PYL. 312-313 contacts chorismate; it reads GT. E339 provides a ligand contact to Mg(2+). Chorismate contacts are provided by residues R447, 461–463, and G463; that span reads GAG. Position 476 (E476) interacts with Mg(2+).

This sequence belongs to the anthranilate synthase component I family. In terms of assembly, heterotetramer consisting of two non-identical subunits: a beta subunit (TrpG) and a large alpha subunit (TrpE). Mg(2+) is required as a cofactor.

It carries out the reaction chorismate + L-glutamine = anthranilate + pyruvate + L-glutamate + H(+). Its pathway is amino-acid biosynthesis; L-tryptophan biosynthesis; L-tryptophan from chorismate: step 1/5. With respect to regulation, feedback inhibited by tryptophan. Its function is as follows. Part of a heterotetrameric complex that catalyzes the two-step biosynthesis of anthranilate, an intermediate in the biosynthesis of L-tryptophan. In the first step, the glutamine-binding beta subunit (TrpG) of anthranilate synthase (AS) provides the glutamine amidotransferase activity which generates ammonia as a substrate that, along with chorismate, is used in the second step, catalyzed by the large alpha subunit of AS (TrpE) to produce anthranilate. In the absence of TrpG, TrpE can synthesize anthranilate directly from chorismate and high concentrations of ammonia. The polypeptide is Anthranilate synthase component 1 (trpE) (Acinetobacter calcoaceticus).